The primary structure comprises 445 residues: Tubulin beta-2 chain (445 aa).

GTP-binding residues include Q12, E73, S142, G146, T147, G148, N208, and N230. E73 is a binding site for Mg(2+).

Belongs to the tubulin family. As to quaternary structure, dimer of alpha and beta chains. A typical microtubule is a hollow water-filled tube with an outer diameter of 25 nm and an inner diameter of 15 nM. Alpha-beta heterodimers associate head-to-tail to form protofilaments running lengthwise along the microtubule wall with the beta-tubulin subunit facing the microtubule plus end conferring a structural polarity. Microtubules usually have 13 protofilaments but different protofilament numbers can be found in some organisms and specialized cells. Mg(2+) serves as cofactor.

It localises to the cytoplasm. The protein resides in the cytoskeleton. Its function is as follows. Tubulin is the major constituent of microtubules, a cylinder consisting of laterally associated linear protofilaments composed of alpha- and beta-tubulin heterodimers. Microtubules grow by the addition of GTP-tubulin dimers to the microtubule end, where a stabilizing cap forms. Below the cap, tubulin dimers are in GDP-bound state, owing to GTPase activity of alpha-tubulin. This chain is Tubulin beta-2 chain (TUBB2), found in Suillus bovinus (Jersey cow bolete).